The primary structure comprises 132 residues: Small ribosomal subunit protein uS9 (132 aa).

A disordered region spans residues 101 to 132; the sequence is KRAGLLTRDPRMKERKKPGLKAARRSPQFSKR. Basic residues predominate over residues 113–132; that stretch reads KERKKPGLKAARRSPQFSKR.

It belongs to the universal ribosomal protein uS9 family.

The polypeptide is Small ribosomal subunit protein uS9 (Staphylococcus aureus (strain USA300)).